The primary structure comprises 462 residues: Indoleacetamide hydrolase (462 aa).

Active-site charge relay system residues include Lys-74 and Ser-149. Ser-173 (acyl-ester intermediate) is an active-site residue.

Belongs to the amidase family.

The protein operates within plant hormone metabolism; auxin biosynthesis. In terms of biological role, hydrolyzes indole-3-acetamide (IAM) into indole-3-acetic acid (IAA). The protein is Indoleacetamide hydrolase (iaaH) of Allorhizobium ampelinum (strain ATCC BAA-846 / DSM 112012 / S4) (Agrobacterium vitis (strain S4)).